The following is a 135-amino-acid chain: Aspartate 1-decarboxylase (135 aa).

Residue Ser-25 is the Schiff-base intermediate with substrate; via pyruvic acid of the active site. Residue Ser-25 is modified to Pyruvic acid (Ser). Thr-57 is a binding site for substrate. The Proton donor role is filled by Tyr-58. 73-75 is a binding site for substrate; that stretch reads GSA.

The protein belongs to the PanD family. Heterooctamer of four alpha and four beta subunits. Pyruvate serves as cofactor. Is synthesized initially as an inactive proenzyme, which is activated by self-cleavage at a specific serine bond to produce a beta-subunit with a hydroxyl group at its C-terminus and an alpha-subunit with a pyruvoyl group at its N-terminus.

It is found in the cytoplasm. It carries out the reaction L-aspartate + H(+) = beta-alanine + CO2. It functions in the pathway cofactor biosynthesis; (R)-pantothenate biosynthesis; beta-alanine from L-aspartate: step 1/1. Functionally, catalyzes the pyruvoyl-dependent decarboxylation of aspartate to produce beta-alanine. The chain is Aspartate 1-decarboxylase from Albidiferax ferrireducens (strain ATCC BAA-621 / DSM 15236 / T118) (Rhodoferax ferrireducens).